The sequence spans 184 residues: Thymidine kinase (184 aa).

ATP-binding positions include 10-17 and 83-86; these read GPMYSGKT and DEVQ. Residue glutamate 84 is the Proton acceptor of the active site. Zn(2+) is bound by residues cysteine 140, cysteine 143, cysteine 173, and cysteine 176.

This sequence belongs to the thymidine kinase family. Homotetramer.

The protein resides in the cytoplasm. It carries out the reaction thymidine + ATP = dTMP + ADP + H(+). This Thermotoga sp. (strain RQ2) protein is Thymidine kinase.